A 410-amino-acid chain; its full sequence is MLITVPLAGELKFYPLNEEFRVSFGAPVFFFFLSLLRHVPAVLPGFLTGAAVFIFRVFLELWGGGHNGLTPILYDQASGFFFYMTYACLFSILKANRFRERPIMLGFIGFMIEVVSDCVELTVQFLIFHTVVTPEKITDIAVIAISHTFIVMSFYSVLKLYETQSREKQTRQQHEHMLMIVSNLYEETVHLKKTLKTTEKVTNDSYQLYREMKGKDVQLSGRILRLAGEIHEVKKDNQRIFAGLSKLISNESLRDYMRASDLLQLVIRMNEKYAEALGKQIDFYCSIEGEHDEYHVFIVLSIINNLTANAVEAMDEEGMVSLRLRKPNESMVEFQVEDNGPGISEKIGDIVFDPGFTSKYDEFGTPSTGIGLSYVKEIVTELEGDITFDNQQRGVVFAIRLPVRHLIQKG.

The Extracellular portion of the chain corresponds to 1 to 15; that stretch reads MLITVPLAGELKFYP. The helical transmembrane segment at 16–36 threads the bilayer; it reads LNEEFRVSFGAPVFFFFLSLL. At 37–38 the chain is on the cytoplasmic side; it reads RH. The chain crosses the membrane as a helical span at residues 39–59; sequence VPAVLPGFLTGAAVFIFRVFL. The Extracellular segment spans residues 60-71; that stretch reads ELWGGGHNGLTP. Residues 72-92 form a helical membrane-spanning segment; sequence ILYDQASGFFFYMTYACLFSI. At 93–102 the chain is on the cytoplasmic side; sequence LKANRFRERP. A helical transmembrane segment spans residues 103–123; it reads IMLGFIGFMIEVVSDCVELTV. Topologically, residues 124 to 139 are extracellular; the sequence is QFLIFHTVVTPEKITD. Residues 140–160 form a helical membrane-spanning segment; that stretch reads IAVIAISHTFIVMSFYSVLKL. The Cytoplasmic segment spans residues 161 to 410; the sequence is YETQSREKQT…LPVRHLIQKG (250 aa). The Histidine kinase domain occupies 189–405; it reads VHLKKTLKTT…VFAIRLPVRH (217 aa). Histidine 190 carries the post-translational modification Phosphohistidine; by autocatalysis.

As to quaternary structure, homotrimer. Under poor nitrogen source such as nitrate, the complex between GlnK and AmtB, which are the transmembrane ammonium transporter and its cognate regulator, respectively, interacts with TnrA. GlnK-ATP complex are not able to bind TnrA.

Its subcellular location is the cell membrane. It carries out the reaction ATP + protein L-histidine = ADP + protein N-phospho-L-histidine.. Its function is as follows. Member of the two-component regulatory system GlnK/GlnL that positively regulates the expression of the glsA-glnT operon in response to glutamine. It seems that autophosphorylated GlnK transfers a phosphoryl group to GlnL, which positively regulates the expression of the glsA-glnT operon. Interaction between GlnK-AmtB complex and TnrA protects TnrA from proteolytic degradation. The sequence is that of Sensor histidine kinase GlnK from Bacillus subtilis (strain 168).